A 543-amino-acid polypeptide reads, in one-letter code: Zinc finger protein egl-43 (543 aa).

The interval 2-62 is positive regulatory (PR) domain; that stretch reads SIDTDFLTSV…NLIKEADDGE (61 aa). 2 C2H2-type zinc fingers span residues 159-181 and 187-209; these read HKCGVCPKSFSSASGLKQHSHIH and FRCHLCPKSYTQFSNLCRHRRVH. The C2H2-type 3; atypical zinc finger occupies 213-233; that stretch reads WTCPTCQSQMPSQAALTKHRP. A disordered region spans residues 299-380; the sequence is PDAECSSGHA…TSTKKRPTSH (82 aa). Positions 306-317 are enriched in polar residues; that stretch reads GHASESSPTTTE. The segment covering 335 to 348 has biased composition (basic and acidic residues); that stretch reads TTSKSDDGEDRDSI. C2H2-type zinc fingers lie at residues 444–466 and 472–495; these read YTCKFCQKVFPRSANLTRHLRTH and YKCQYCERSFSISSNLQRHVRNIH. Residues 496–543 are disordered; the sequence is NKPNTSLTPHNHHRQRSLHNSTSTSTTTTTVHHPLLHLPGTSVPVPKV. Residues 513-533 are compositionally biased toward low complexity; the sequence is LHNSTSTSTTTTTVHHPLLHL.

The protein localises to the nucleus. Functionally, probable transcription factor, required for migration of the hermaphrodite-specific motor neurons (HSNs) from the tail to the gonad primordium during HSN cell differentiation. Required for phasmid neuron development. Required to specify the pi-cell fate of ventral uterine precursor cell (VU) cells. In terms of biological role, probable transcription factor, involved in lin-12 (Notch)-dependent anchor cell (AC) and ventral uterine (VU) precursor cell fate specification and in AC invasion. Prevents AC proliferation after AC cell specification by repressing lin-12 expression. May form a positive feedback loop, together with the transcription factor fos-1, that maintains mutual high levels of expression and so activates AC invasion. Its function is as follows. Dispensable for anchor cell (AC) invasion and for preventing AC proliferation. The polypeptide is Zinc finger protein egl-43 (Caenorhabditis elegans).